We begin with the raw amino-acid sequence, 801 residues long: Fibroblast growth factor receptor 3 (801 aa).

The signal sequence occupies residues 1-20 (MVVPACVLVFCVAVVAGATS). At 21-369 (EPPGPEQRVV…TDEAGSVYAG (349 aa)) the chain is on the extracellular side. The Ig-like C2-type 1 domain occupies 22–124 (PPGPEQRVVR…VLCHFSVRVT (103 aa)). Cysteines 59 and 107 form a disulfide. N-linked (GlcNAc...) asparagine glycosylation occurs at asparagine 96. The disordered stretch occupies residues 125-146 (DAPSSGDDEDGEDVAEDTGAPY). The segment covering 130–140 (GDDEDGEDVAE) has biased composition (acidic residues). Ig-like C2-type domains lie at 145 to 238 (PYWT…YTLD) and 247 to 349 (PILQ…AWLV). Cysteine 170 and cysteine 222 are disulfide-bonded. Asparagine 219, asparagine 256, asparagine 288, asparagine 309, and asparagine 322 each carry an N-linked (GlcNAc...) asparagine glycan. Cysteine 269 and cysteine 333 are joined by a disulfide. The chain crosses the membrane as a helical span at residues 370–390 (VLSYGVVFFLFILVVAAVILC). Residues 391–801 (RLRSPPKKGL…GPPSNGGPRT (411 aa)) are Cytoplasmic-facing. Phosphoserine occurs at positions 438 and 439. In terms of domain architecture, Protein kinase spans 466–756 (LTLGKPLGEG…LTVTSTDEYL (291 aa)). ATP is bound by residues 472–480 (LGEGCFGQV) and lysine 502. Residue aspartate 611 is the Proton acceptor of the active site. 4 positions are modified to phosphotyrosine; by autocatalysis: tyrosine 641, tyrosine 642, tyrosine 719, and tyrosine 755. The disordered stretch occupies residues 762-801 (FEQYSPGGQDTPSSSSSGDDSVFTHDLLPPGPPSNGGPRT). The segment covering 766–782 (SPGGQDTPSSSSSGDDS) has biased composition (low complexity). Residues 790–801 (PPGPPSNGGPRT) show a composition bias toward pro residues.

This sequence belongs to the protein kinase superfamily. Tyr protein kinase family. Fibroblast growth factor receptor subfamily. Monomer. Homodimer after ligand binding. Interacts with FGF1, FGF2, FGF4, FGF6; FGF8, FGF9, FGF10, FGF17, FGF18, FGF19, FGF20 and FGF23 (in vitro). Interacts with KLB. Affinity for fibroblast growth factors (FGFs) is increased by heparan sulfate glycosaminoglycans that function as coreceptors. Likewise, KLB increases the affinity for FGF19 and FGF21. Interacts with PIK3R1, PLCG1, SOCS1 and SOCS3. In terms of processing, autophosphorylated. Binding of FGF family members together with heparan sulfate proteoglycan or heparin promotes receptor dimerization and autophosphorylation on tyrosine residues. Autophosphorylation occurs in trans between the two FGFR molecules present in the dimer. Phosphorylation at Tyr-719 is essential for stimulation of cell proliferation and activation of PIK3R1, STAT1 and MAP kinase signaling. Phosphorylation at Tyr-755 is required for interaction with PIK3R1 and PLCG1. Post-translationally, ubiquitinated. Is rapidly ubiquitinated after ligand binding and autophosphorylation, leading to receptor internalization and degradation. Subject to both proteasomal and lysosomal degradation. N-glycosylated in the endoplasmic reticulum. The N-glycan chains undergo further maturation to an Endo H-resistant form in the Golgi apparatus. As to expression, in embryo, expressed in heart, lung, kidney, skin, head and liver but not in muscle. In adult, highest levels in brain. Also expressed in liver, lung, kidney, testis, ovary and uterus. Very low levels in heart, thymus, spleen and muscle.

The protein resides in the cell membrane. Its subcellular location is the cytoplasmic vesicle. It is found in the endoplasmic reticulum. The catalysed reaction is L-tyrosyl-[protein] + ATP = O-phospho-L-tyrosyl-[protein] + ADP + H(+). Its activity is regulated as follows. Present in an inactive conformation in the absence of bound ligand. Ligand binding leads to dimerization and activation by autophosphorylation on tyrosine residues. Tyrosine-protein kinase that acts as a cell-surface receptor for fibroblast growth factors and plays an essential role in the regulation of cell proliferation, differentiation and apoptosis. Plays an essential role in the regulation of chondrocyte differentiation, proliferation and apoptosis, and is required for normal skeleton development. Regulates both osteogenesis and postnatal bone mineralization by osteoblasts. Promotes apoptosis in chondrocytes, but can also promote cancer cell proliferation. Required for normal development of the inner ear. Phosphorylates PLCG1, CBL and FRS2. Ligand binding leads to the activation of several signaling cascades. Activation of PLCG1 leads to the production of the cellular signaling molecules diacylglycerol and inositol 1,4,5-trisphosphate. Phosphorylation of FRS2 triggers recruitment of GRB2, GAB1, PIK3R1 and SOS1, and mediates activation of RAS, MAPK1/ERK2, MAPK3/ERK1 and the MAP kinase signaling pathway, as well as of the AKT1 signaling pathway. Plays a role in the regulation of vitamin D metabolism. Mutations that lead to constitutive kinase activation or impair normal FGFR3 maturation, internalization and degradation lead to aberrant signaling. Over-expressed or constitutively activated FGFR3 promotes activation of STAT1, STAT5A and STAT5B. Plays a role in postnatal lung development. The chain is Fibroblast growth factor receptor 3 (Fgfr3) from Mus musculus (Mouse).